Reading from the N-terminus, the 148-residue chain is Lysozyme-like protein 1 (148 aa).

The signal sequence occupies residues 1–19 (MKSVGVFALIISFSIVAES). A C-type lysozyme domain is found at 20-148 (KIYTRCKLAK…SEWKRGCEVS (129 aa)). Intrachain disulfides connect Cys-25–Cys-145, Cys-49–Cys-133, Cys-83–Cys-98, and Cys-94–Cys-112. The active site involves Glu-54. Asn-58 carries an N-linked (GlcNAc...) asparagine glycan. Asp-71 is a catalytic residue.

This sequence belongs to the glycosyl hydrolase 22 family. Monomer.

It is found in the secreted. The catalysed reaction is Hydrolysis of (1-&gt;4)-beta-linkages between N-acetylmuramic acid and N-acetyl-D-glucosamine residues in a peptidoglycan and between N-acetyl-D-glucosamine residues in chitodextrins.. The sequence is that of Lysozyme-like protein 1 (Lyzl1) from Mus musculus (Mouse).